The sequence spans 339 residues: RNA polymerase II holoenzyme cyclin-like subunit (339 aa).

The interval 48-67 (PNSADSSNGNAANNGGGNGR) is disordered. Over residues 49 to 60 (NSADSSNGNAAN) the composition is skewed to low complexity. A Cyclin N-terminal domain is found at 93–194 (RIYCYFLIMK…LIEELQCYLI (102 aa)).

This sequence belongs to the cyclin family. Cyclin C subfamily. As to quaternary structure, component of the SRB8-11 complex, a regulatory module of the Mediator complex.

It localises to the nucleus. Component of the SRB8-11 complex. The SRB8-11 complex is a regulatory module of the Mediator complex which is itself involved in regulation of basal and activated RNA polymerase II-dependent transcription. The SRB8-11 complex may be involved in the transcriptional repression of a subset of genes regulated by Mediator. It may inhibit the association of the Mediator complex with RNA polymerase II to form the holoenzyme complex. The SRB8-11 complex phosphorylates the C-terminal domain (CTD) of the largest subunit of RNA polymerase II. The protein is RNA polymerase II holoenzyme cyclin-like subunit (SSN8) of Candida glabrata (strain ATCC 2001 / BCRC 20586 / JCM 3761 / NBRC 0622 / NRRL Y-65 / CBS 138) (Yeast).